Reading from the N-terminus, the 68-residue chain is Large ribosomal subunit protein uL29 (68 aa).

This sequence belongs to the universal ribosomal protein uL29 family.

The sequence is that of Large ribosomal subunit protein uL29 from Nitrobacter winogradskyi (strain ATCC 25391 / DSM 10237 / CIP 104748 / NCIMB 11846 / Nb-255).